We begin with the raw amino-acid sequence, 406 residues long: Bifunctional enzyme IspD/IspF (406 aa).

Positions 1-246 are 2-C-methyl-D-erythritol 4-phosphate cytidylyltransferase; the sequence is MTQMHSTQPM…KLSAGLLPDV (246 aa). The 2-C-methyl-D-erythritol 2,4-cyclodiphosphate synthase stretch occupies residues 247–406; the sequence is RTGNGYDVHQ…ATVVYRGGRP (160 aa). A divalent metal cation contacts are provided by Asp-253 and His-255. 4-CDP-2-C-methyl-D-erythritol 2-phosphate-binding positions include 253–255 and 279–280; these read DVH and HS. His-287 contributes to the a divalent metal cation binding site. 4-CDP-2-C-methyl-D-erythritol 2-phosphate-binding positions include 301-303, 377-380, Phe-384, and Arg-387; these read DIG and TTNE.

The protein in the N-terminal section; belongs to the IspD/TarI cytidylyltransferase family. IspD subfamily. This sequence in the C-terminal section; belongs to the IspF family. Requires a divalent metal cation as cofactor.

It carries out the reaction 2-C-methyl-D-erythritol 4-phosphate + CTP + H(+) = 4-CDP-2-C-methyl-D-erythritol + diphosphate. The enzyme catalyses 4-CDP-2-C-methyl-D-erythritol 2-phosphate = 2-C-methyl-D-erythritol 2,4-cyclic diphosphate + CMP. It participates in isoprenoid biosynthesis; isopentenyl diphosphate biosynthesis via DXP pathway; isopentenyl diphosphate from 1-deoxy-D-xylulose 5-phosphate: step 2/6. The protein operates within isoprenoid biosynthesis; isopentenyl diphosphate biosynthesis via DXP pathway; isopentenyl diphosphate from 1-deoxy-D-xylulose 5-phosphate: step 4/6. Bifunctional enzyme that catalyzes the formation of 4-diphosphocytidyl-2-C-methyl-D-erythritol from CTP and 2-C-methyl-D-erythritol 4-phosphate (MEP) (IspD), and catalyzes the conversion of 4-diphosphocytidyl-2-C-methyl-D-erythritol 2-phosphate (CDP-ME2P) to 2-C-methyl-D-erythritol 2,4-cyclodiphosphate (ME-CPP) with a corresponding release of cytidine 5-monophosphate (CMP) (IspF). This is Bifunctional enzyme IspD/IspF from Rhizobium rhizogenes (strain K84 / ATCC BAA-868) (Agrobacterium radiobacter).